We begin with the raw amino-acid sequence, 436 residues long: MFDSTLNPLWQRYILAVQEEVKPALGCTEPISLALAAAVAAAELEGPVERVEAWVSPNLMKNGLGVTVPGTGMVGLPIAAALGALGGNANAGLEVLKDATAQAIADAKALLAAGKVSVKIQEPCNEILFSRAKVWNGEKWACVTIVGGHTNIVHIETHNGVVFTQQACVAEGEQESPLTVLSRTTLAEILKFVNEVPFAAIRFILDSAKLNCALSQEGLSGKWGLHIGATLEKQCERGLLAKDLSSSIVIRTSAASDARMGGATLPAMSNSGSGNQGITATMPVVVVAEHFGADDERLARALMLSHLSAIYIHNQLPRLSALCAATTAAMGAAAGMAWLVDGRYETISMAISSMIGDVSGMICDGASNSCAMKVSTSASAAWKAVLMALDDTAVTGNEGIVAHDVEQSIANLCALASHSMQQTDRQIIEIMASKAR.

This sequence belongs to the UPF0597 family.

The protein is UPF0597 protein YhaM of Escherichia coli O139:H28 (strain E24377A / ETEC).